Here is a 189-residue protein sequence, read N- to C-terminus: Peptidyl-tRNA hydrolase (189 aa).

Y15 contributes to the tRNA binding site. The active-site Proton acceptor is the H20. TRNA contacts are provided by F66, N68, and N114.

Belongs to the PTH family. Monomer.

It localises to the cytoplasm. The catalysed reaction is an N-acyl-L-alpha-aminoacyl-tRNA + H2O = an N-acyl-L-amino acid + a tRNA + H(+). Hydrolyzes ribosome-free peptidyl-tRNAs (with 1 or more amino acids incorporated), which drop off the ribosome during protein synthesis, or as a result of ribosome stalling. In terms of biological role, catalyzes the release of premature peptidyl moieties from peptidyl-tRNA molecules trapped in stalled 50S ribosomal subunits, and thus maintains levels of free tRNAs and 50S ribosomes. In Streptococcus pyogenes serotype M3 (strain ATCC BAA-595 / MGAS315), this protein is Peptidyl-tRNA hydrolase.